A 547-amino-acid polypeptide reads, in one-letter code: Cytochrome P450 monooxygenase oblB (547 aa).

Helical transmembrane passes span 42 to 62 and 242 to 262; these read GAVG…RLFL and FDMF…PWLI. A glycan (N-linked (GlcNAc...) asparagine) is linked at N277. The chain crosses the membrane as a helical span at residues 345 to 365; it reads VLIGSGTMTTAGTMGFLCYYI. C489 contributes to the heme binding site.

The protein belongs to the cytochrome P450 family. Heme serves as cofactor.

The protein resides in the membrane. The catalysed reaction is ophiobolin F + 4 reduced [NADPH--hemoprotein reductase] + 4 O2 = ophiobolin C + 4 oxidized [NADPH--hemoprotein reductase] + 6 H2O + 4 H(+). Its pathway is secondary metabolite biosynthesis; terpenoid biosynthesis. In terms of biological role, cytochrome P450 monooxygenase; part of the gene cluster that mediates the biosynthesis of the sesterterpenes ophiobolins, fungal phytotoxins with potential anti-cancer activities. The first step of the pathway is performed by the sesterterpene synthase oblA that possesses both prenyl transferase and terpene cyclase activity, converting isopentenyl diphosphate and dimethylallyl diphosphate into geranylfarnesyl diphosphate (GFPP) and further converting GFPP into ophiobolin F, respectively. Other sesterterpenoids (C(25) terpenoids) are found as minor products of oblA. The cytochrome P450 monooxygenase oblB then catalyzes a four-step oxidative transformation of ophiobolin F to yield ophiobolin C. The function of the cytochrome P450 monooxygenase oblE has still to be determined. This Emericella variicolor (Aspergillus stellatus) protein is Cytochrome P450 monooxygenase oblB.